We begin with the raw amino-acid sequence, 170 residues long: Adenine phosphoribosyltransferase (170 aa).

It belongs to the purine/pyrimidine phosphoribosyltransferase family. In terms of assembly, homodimer.

It is found in the cytoplasm. It carries out the reaction AMP + diphosphate = 5-phospho-alpha-D-ribose 1-diphosphate + adenine. The protein operates within purine metabolism; AMP biosynthesis via salvage pathway; AMP from adenine: step 1/1. Its function is as follows. Catalyzes a salvage reaction resulting in the formation of AMP, that is energically less costly than de novo synthesis. The chain is Adenine phosphoribosyltransferase from Mesoplasma florum (strain ATCC 33453 / NBRC 100688 / NCTC 11704 / L1) (Acholeplasma florum).